The chain runs to 400 residues: Endoplasmin (400 aa).

Lysine 1 is subject to N6-succinyllysine. Asparagine 42 carries N-linked (GlcNAc...) asparagine glycosylation. Residue serine 44 is modified to Phosphoserine. Lysine 76 carries the N6-acetyllysine modification. Residues asparagine 78 and asparagine 99 are each glycosylated (N-linked (GlcNAc...) asparagine). An N6-succinyllysine modification is found at lysine 230. The tract at residues 346–400 is disordered; it reads IDPEAQVEEEPEEEPEDTTEDTEQDEEEEVDAGTEEEEEEEQETAKESTAEKDEL. Positions 350 to 387 are enriched in acidic residues; sequence AQVEEEPEEEPEDTTEDTEQDEEEEVDAGTEEEEEEEQ. Threonine 379 is modified (phosphothreonine). Residues 388–400 are compositionally biased toward basic and acidic residues; it reads ETAKESTAEKDEL. The Prevents secretion from ER signature appears at 397 to 400; it reads KDEL.

It belongs to the heat shock protein 90 family. As to quaternary structure, homodimer; disulfide-linked. Component of an EIF2 complex at least composed of CELF1/CUGBP1, CALR, CALR3, EIF2S1, EIF2S2, HSP90B1 and HSPA5. Part of a large chaperone multiprotein complex comprising DNAJB11, HSP90B1, HSPA5, HYOU, PDIA2, PDIA4, PDIA6, PPIB, SDF2L1, UGGT1 and very small amounts of ERP29, but not, or at very low levels, CALR nor CANX. Interacts with AIMP1; regulates its retention in the endoplasmic reticulum. Hyperglycosylated form interacts with OS9; promoting its degradation by the endoplasmic reticulum associated degradation (ERAD). Interacts with CNPY3. This interaction is disrupted in the presence of ATP. Interacts with TLR4 and TLR9, but not with TLR3. Interacts with MZB1 in a calcium-dependent manner. Interacts with METTL23. Interacts with IL1B; the interaction facilitates cargo translocation into the ERGIC. Interacts with EIF2AK3. Phosphorylated by CK2. Post-translationally, N-glycosylated cotranslationally at Asn-217 by STT3A-containing OST-A complex: this glycosylation is constitutive. In response to various stress, 5 additional facultative sites (Asn-62, Asn-107, Asn-445, Asn-481 and Asn-502) can be glycosylated post-translationally by STT3B-containing OST-B complex, leading to a hyperglycosylated form that is degraded by the ER-associated degradation (ERAD) pathway. In normal conditions, the OST-A complex together with CCDC134 prevent glycosylation at facultative sites during protein folding, thereby preventing hyperglycosylation. Mechanistically, nascent HSP90B1 is tethered during translation to a specialized CCDC134-containing translocon that forms a microenvironment for its folding, in which STT3A associates with the SRT pseudosubstrate motif, and prevents access to facultative glycosylation sites until folding is completed, rendering its facultative sites inaccessible to the OST-B complex.

It is found in the endoplasmic reticulum lumen. It localises to the sarcoplasmic reticulum lumen. The protein localises to the melanosome. The enzyme catalyses ATP + H2O = ADP + phosphate + H(+). Its function is as follows. ATP-dependent chaperone involved in the processing of proteins in the endoplasmic reticulum, regulating their transport. Together with MESD, acts as a modulator of the Wnt pathway by promoting the folding of LRP6, a coreceptor of the canonical Wnt pathway. When associated with CNPY3, required for proper folding of Toll-like receptors. Promotes folding and trafficking of TLR4 to the cell surface. May participate in the unfolding of cytosolic leaderless cargos (lacking the secretion signal sequence) such as the interleukin 1/IL-1 to facilitate their translocation into the ERGIC (endoplasmic reticulum-Golgi intermediate compartment) and secretion; the translocation process is mediated by the cargo receptor TMED10. This chain is Endoplasmin (HSP90B1), found in Mesocricetus auratus (Golden hamster).